The chain runs to 2839 residues: Bifunctional DNA-directed RNA polymerase subunit beta-beta' (2839 aa).

Positions 1–1433 (MVDSSYMCAS…CLNVALKQNN (1433 aa)) are DNA-directed RNA polymerase subunit beta. The segment at 1436–2839 (IEDISHTNIA…KESVAESRYN (1404 aa)) is DNA-directed RNA polymerase subunit beta'. 4 residues coordinate Zn(2+): Cys1501, Cys1503, Cys1516, and Cys1519. Mg(2+) is bound by residues Asp1893, Asp1895, and Asp1897. Residues Cys2238, Cys2312, Cys2319, and Cys2322 each coordinate Zn(2+).

In the N-terminal section; belongs to the RNA polymerase beta chain family. The protein in the C-terminal section; belongs to the RNA polymerase beta' chain family. In terms of assembly, the RNAP catalytic core consists of 2 alpha, 1 beta/beta' and 1 omega subunit. When a sigma factor is associated with the core the holoenzyme is formed, which can initiate transcription. The cofactor is Mg(2+). It depends on Zn(2+) as a cofactor.

The catalysed reaction is RNA(n) + a ribonucleoside 5'-triphosphate = RNA(n+1) + diphosphate. Functionally, DNA-dependent RNA polymerase catalyzes the transcription of DNA into RNA using the four ribonucleoside triphosphates as substrates. The sequence is that of Bifunctional DNA-directed RNA polymerase subunit beta-beta' (rpoBC) from Wolbachia sp. subsp. Brugia malayi (strain TRS).